Consider the following 429-residue polypeptide: Queuine tRNA-ribosyltransferase accessory subunit 2 (429 aa).

Positions 330, 332, 335, and 361 each coordinate Zn(2+).

It belongs to the queuine tRNA-ribosyltransferase family. QTRT2 subfamily. As to quaternary structure, heterodimer of a catalytic subunit and an accessory subunit. The cofactor is Zn(2+).

The protein localises to the cytoplasm. In terms of biological role, non-catalytic subunit of the queuine tRNA-ribosyltransferase (TGT) that catalyzes the base-exchange of a guanine (G) residue with queuine (Q) at position 34 (anticodon wobble position) in tRNAs with GU(N) anticodons (tRNA-Asp, -Asn, -His and -Tyr), resulting in the hypermodified nucleoside queuosine (7-(((4,5-cis-dihydroxy-2-cyclopenten-1-yl)amino)methyl)-7-deazaguanosine). In Culex quinquefasciatus (Southern house mosquito), this protein is Queuine tRNA-ribosyltransferase accessory subunit 2.